The chain runs to 507 residues: ATP synthase subunit alpha, chloroplastic (507 aa).

Gly-170 to Thr-177 lines the ATP pocket.

Belongs to the ATPase alpha/beta chains family. F-type ATPases have 2 components, CF(1) - the catalytic core - and CF(0) - the membrane proton channel. CF(1) has five subunits: alpha(3), beta(3), gamma(1), delta(1), epsilon(1). CF(0) has four main subunits: a, b, b' and c.

It localises to the plastid. It is found in the chloroplast thylakoid membrane. It carries out the reaction ATP + H2O + 4 H(+)(in) = ADP + phosphate + 5 H(+)(out). Its function is as follows. Produces ATP from ADP in the presence of a proton gradient across the membrane. The alpha chain is a regulatory subunit. This chain is ATP synthase subunit alpha, chloroplastic, found in Gossypium barbadense (Sea Island cotton).